The chain runs to 66 residues: Cytochrome c oxidase polypeptide VIII, mitochondrial (66 aa).

Residues Met1 to Phe17 constitute a mitochondrion transit peptide. Residues Ser18–Pro38 lie on the Mitochondrial matrix side of the membrane. A helical transmembrane segment spans residues Leu39 to Val59. Over Lys60–Leu66 the chain is Mitochondrial intermembrane.

This sequence belongs to the cytochrome c oxidase VIIc family. As to quaternary structure, component of the cytochrome c oxidase (complex IV, CIV), a multisubunit enzyme composed of a catalytic core of 3 subunits and several supernumerary subunits. The complex exists as a monomer or a dimer and forms supercomplexes (SCs) in the inner mitochondrial membrane with ubiquinol-cytochrome c oxidoreductase (cytochrome b-c1 complex, complex III, CIII).

The protein localises to the mitochondrion inner membrane. Its pathway is energy metabolism; oxidative phosphorylation. Its function is as follows. Component of the cytochrome c oxidase, the last enzyme in the mitochondrial electron transport chain which drives oxidative phosphorylation. The respiratory chain contains 3 multisubunit complexes succinate dehydrogenase (complex II, CII), ubiquinol-cytochrome c oxidoreductase (cytochrome b-c1 complex, complex III, CIII) and cytochrome c oxidase (complex IV, CIV), that cooperate to transfer electrons derived from NADH and succinate to molecular oxygen, creating an electrochemical gradient over the inner membrane that drives transmembrane transport and the ATP synthase. Cytochrome c oxidase is the component of the respiratory chain that catalyzes the reduction of oxygen to water. Electrons originating from reduced cytochrome c in the intermembrane space (IMS) are transferred via the dinuclear copper A center (CU(A)) of subunit 2 and heme A of subunit 1 to the active site in subunit 1, a binuclear center (BNC) formed by heme A3 and copper B (CU(B)). The BNC reduces molecular oxygen to 2 water molecules using 4 electrons from cytochrome c in the IMS and 4 protons from the mitochondrial matrix. This chain is Cytochrome c oxidase polypeptide VIII, mitochondrial (cox8), found in Schizosaccharomyces pombe (strain 972 / ATCC 24843) (Fission yeast).